Consider the following 575-residue polypeptide: Thiol:disulfide interchange protein DsbD (575 aa).

The N-terminal stretch at 1-24 (MIKRTLMLFLLLCSPLLTPAAANA) is a signal peptide. Disulfide bonds link Cys126/Cys132 and Cys192/Cys314. Helical transmembrane passes span 180–200 (AILI…YPLI), 216–236 (IFWL…LLGL), 253–273 (YVLI…FGLY), 297–317 (LFGV…CTTA), 336–356 (GLTL…VTLF), 367–387 (WMQY…VFLL), 394–414 (AWGI…GFVL), and 425–445 (VIQL…QDWF). Residues 444–575 (WFWGTTVTQQ…FNEHLQHLPK (132 aa)) form the Thioredoxin domain. An intrachain disulfide couples Cys490 to Cys493.

This sequence belongs to the thioredoxin family. DsbD subfamily.

Its subcellular location is the cell inner membrane. It catalyses the reaction [protein]-dithiol + NAD(+) = [protein]-disulfide + NADH + H(+). The enzyme catalyses [protein]-dithiol + NADP(+) = [protein]-disulfide + NADPH + H(+). In terms of biological role, required to facilitate the formation of correct disulfide bonds in some periplasmic proteins and for the assembly of the periplasmic c-type cytochromes. Acts by transferring electrons from cytoplasmic thioredoxin to the periplasm. This transfer involves a cascade of disulfide bond formation and reduction steps. The chain is Thiol:disulfide interchange protein DsbD from Photorhabdus laumondii subsp. laumondii (strain DSM 15139 / CIP 105565 / TT01) (Photorhabdus luminescens subsp. laumondii).